A 475-amino-acid chain; its full sequence is ATP synthase subunit beta (475 aa).

Position 156-163 (156-163) interacts with ATP; that stretch reads GGAGVGKT.

The protein belongs to the ATPase alpha/beta chains family. As to quaternary structure, F-type ATPases have 2 components, CF(1) - the catalytic core - and CF(0) - the membrane proton channel. CF(1) has five subunits: alpha(3), beta(3), gamma(1), delta(1), epsilon(1). CF(0) has three main subunits: a(1), b(2) and c(9-12). The alpha and beta chains form an alternating ring which encloses part of the gamma chain. CF(1) is attached to CF(0) by a central stalk formed by the gamma and epsilon chains, while a peripheral stalk is formed by the delta and b chains.

It localises to the cell membrane. The enzyme catalyses ATP + H2O + 4 H(+)(in) = ADP + phosphate + 5 H(+)(out). Functionally, produces ATP from ADP in the presence of a proton gradient across the membrane. The catalytic sites are hosted primarily by the beta subunits. This is ATP synthase subunit beta from Mycoplasma pneumoniae (strain ATCC 29342 / M129 / Subtype 1) (Mycoplasmoides pneumoniae).